The primary structure comprises 142 residues: Large ribosomal subunit protein uL11 (142 aa).

The protein belongs to the universal ribosomal protein uL11 family. In terms of assembly, part of the ribosomal stalk of the 50S ribosomal subunit. Interacts with L10 and the large rRNA to form the base of the stalk. L10 forms an elongated spine to which L12 dimers bind in a sequential fashion forming a multimeric L10(L12)X complex. One or more lysine residues are methylated.

Its function is as follows. Forms part of the ribosomal stalk which helps the ribosome interact with GTP-bound translation factors. In Idiomarina loihiensis (strain ATCC BAA-735 / DSM 15497 / L2-TR), this protein is Large ribosomal subunit protein uL11.